The primary structure comprises 909 residues: ABC transporter B family member 1 (909 aa).

Positions 1–36 (MTKKNFNDEENESLLETYNKQQQKQSISTTNRSDQK) are disordered. Positions 14–36 (LLETYNKQQQKQSISTTNRSDQK) are enriched in polar residues. A helical transmembrane segment spans residues 85–105 (LFIQIVSLVILAGYLISINAL). The span at 125-134 (TDSGSVSPTS) shows a compositional bias: low complexity. Residues 125 to 147 (TDSGSVSPTSTPSPTPTPTPSPT) are disordered. Residues 135–145 (TPSPTPTPTPS) are compositionally biased toward pro residues. The next 8 membrane-spanning stretches (helical) occupy residues 182–202 (FSTF…LLLI), 206–226 (SFIY…YNVI), 275–295 (IIIV…VLHI), 347–367 (LPII…SLAM), 392–412 (LALV…SWLF), 480–500 (VILL…IVPV), 572–592 (GVFS…IVYV), and 607–627 (LTSF…ISSL). The ABC transmembrane type-1 domain occupies 350-633 (ILAAMVALVF…ISSLMTDFLK (284 aa)). The 237-residue stretch at 666–902 (IELKDVEFSY…TDGIYHNLVK (237 aa)) folds into the ABC transporter domain. An ATP-binding site is contributed by 701-708 (GPSGGGKS).

It belongs to the ABC transporter superfamily. ABCB family.

Its subcellular location is the membrane. In Dictyostelium discoideum (Social amoeba), this protein is ABC transporter B family member 1 (abcB1).